The chain runs to 657 residues: Keratinocyte proline-rich protein (657 aa).

Disordered regions lie at residues 285–320, 425–493, and 517–568; these read QGTY…SPPR, HPFP…PSPE, and QPVP…CGQP. Residues 292–302 are compositionally biased toward low complexity; it reads TSQRRSQSTSR. A compositionally biased stretch (basic and acidic residues) spans 434–444; the sequence is QHLDRSPESSR. Ser442 carries the post-translational modification Phosphoserine. 3 stretches are compositionally biased toward pro residues: residues 449–493, 517–530, and 539–561; these read VPAP…PSPE, QPVP…VPRP, and GPRP…PCSS.

Its subcellular location is the cytoplasm. In Mus musculus (Mouse), this protein is Keratinocyte proline-rich protein.